The chain runs to 226 residues: Biosynthetic peptidoglycan transglycosylase (226 aa).

The chain crosses the membrane as a helical span at residues 5–25 (IGVTVLAVVGLLLLPYLLTPL).

Belongs to the glycosyltransferase 51 family.

It localises to the cell inner membrane. The enzyme catalyses [GlcNAc-(1-&gt;4)-Mur2Ac(oyl-L-Ala-gamma-D-Glu-L-Lys-D-Ala-D-Ala)](n)-di-trans,octa-cis-undecaprenyl diphosphate + beta-D-GlcNAc-(1-&gt;4)-Mur2Ac(oyl-L-Ala-gamma-D-Glu-L-Lys-D-Ala-D-Ala)-di-trans,octa-cis-undecaprenyl diphosphate = [GlcNAc-(1-&gt;4)-Mur2Ac(oyl-L-Ala-gamma-D-Glu-L-Lys-D-Ala-D-Ala)](n+1)-di-trans,octa-cis-undecaprenyl diphosphate + di-trans,octa-cis-undecaprenyl diphosphate + H(+). The protein operates within cell wall biogenesis; peptidoglycan biosynthesis. In terms of biological role, peptidoglycan polymerase that catalyzes glycan chain elongation from lipid-linked precursors. The polypeptide is Biosynthetic peptidoglycan transglycosylase (Nitrobacter hamburgensis (strain DSM 10229 / NCIMB 13809 / X14)).